The following is a 95-amino-acid chain: Small ribosomal subunit protein bS6 (95 aa).

It belongs to the bacterial ribosomal protein bS6 family.

In terms of biological role, binds together with bS18 to 16S ribosomal RNA. This is Small ribosomal subunit protein bS6 from Corynebacterium urealyticum (strain ATCC 43042 / DSM 7109).